Reading from the N-terminus, the 60-residue chain is UPF0291 protein Nther_1806 (60 aa).

Belongs to the UPF0291 family.

It is found in the cytoplasm. The chain is UPF0291 protein Nther_1806 from Natranaerobius thermophilus (strain ATCC BAA-1301 / DSM 18059 / JW/NM-WN-LF).